Here is a 675-residue protein sequence, read N- to C-terminus: DNA ligase (675 aa).

NAD(+) contacts are provided by residues 35 to 39, 84 to 85, and Glu-116; these read DEAYD and SL. Lys-118 functions as the N6-AMP-lysine intermediate in the catalytic mechanism. NAD(+) contacts are provided by Arg-139, Glu-180, Lys-296, and Lys-320. 4 residues coordinate Zn(2+): Cys-414, Cys-417, Cys-432, and Cys-437. The region spanning 597 to 675 is the BRCT domain; the sequence is PVDAFWNGKT…EREFLERLGM (79 aa).

The protein belongs to the NAD-dependent DNA ligase family. LigA subfamily. Requires Mg(2+) as cofactor. The cofactor is Mn(2+).

It catalyses the reaction NAD(+) + (deoxyribonucleotide)n-3'-hydroxyl + 5'-phospho-(deoxyribonucleotide)m = (deoxyribonucleotide)n+m + AMP + beta-nicotinamide D-nucleotide.. Its function is as follows. DNA ligase that catalyzes the formation of phosphodiester linkages between 5'-phosphoryl and 3'-hydroxyl groups in double-stranded DNA using NAD as a coenzyme and as the energy source for the reaction. It is essential for DNA replication and repair of damaged DNA. The sequence is that of DNA ligase from Syntrophobacter fumaroxidans (strain DSM 10017 / MPOB).